We begin with the raw amino-acid sequence, 379 residues long: Cobalt-precorrin-5B C(1)-methyltransferase (379 aa).

Belongs to the CbiD family.

It carries out the reaction Co-precorrin-5B + S-adenosyl-L-methionine = Co-precorrin-6A + S-adenosyl-L-homocysteine. Its pathway is cofactor biosynthesis; adenosylcobalamin biosynthesis; cob(II)yrinate a,c-diamide from sirohydrochlorin (anaerobic route): step 6/10. Functionally, catalyzes the methylation of C-1 in cobalt-precorrin-5B to form cobalt-precorrin-6A. This is Cobalt-precorrin-5B C(1)-methyltransferase from Salmonella paratyphi A (strain ATCC 9150 / SARB42).